Here is a 288-residue protein sequence, read N- to C-terminus: MKIAVMTDSTSYLSQDLIDKYNIQIAPLSVTFDDGKNFTESNEIAIEEFYNKMASSQTIPTTSQPAIGEWITKYEMLRDQGYTDIIVICLSSGISGSYQSSYQAGEMVEGVNVHAFDSKLAAMIEGCYVLRAIEMVEEGYEPQQIIDDLTNMREHTGAYLIVDDLKNLQKSGRITGAQAWVGTLLKMKPVLKFEDGKIIPEEKVRTKKRAIQTLEKKVLDIVKDFEEVTLFVINGDHFEDGQALYKKLQEDCPSGYQVAYSEFGPVVAAHLGSGGLGLGYVGRKIRLT.

Positions 3–282 (IAVMTDSTSY…SGGLGLGYVG (280 aa)) constitute a DegV domain. Residues T62 and S95 each coordinate hexadecanoate.

In terms of biological role, may bind long-chain fatty acids, such as palmitate, and may play a role in lipid transport or fatty acid metabolism. This is DegV domain-containing protein from Staphylococcus aureus.